The primary structure comprises 239 residues: Transcriptional regulatory protein BtsR (239 aa).

The 114-residue stretch at 3 to 116 folds into the Response regulatory domain; it reads KVLIVDDEPL…RLEKTLHRLR (114 aa). Aspartate 54 is modified (4-aspartylphosphate). An HTH LytTR-type domain is found at 137–239; it reads IPCTGHSRIY…LKSLKEAIGL (103 aa).

Phosphorylated by BtsS.

Its function is as follows. Member of the two-component regulatory system BtsS/BtsR. BtsR regulates expression of btsT by binding to its promoter region. This is Transcriptional regulatory protein BtsR from Salmonella typhi.